Reading from the N-terminus, the 182-residue chain is Fatty-acid and retinol-binding protein 2 (182 aa).

The signal sequence occupies residues 1–17; that stretch reads MIRAFLVVALASVAVFS. Coiled-coil stretches lie at residues 46–73 and 131–152; these read LKAITAEEKAALKELAQNHKEYKTEEEF and TLDSLKELAKGYIAEYKALSDD.

This sequence belongs to the fatty-acid and retinol-binding protein (FARBP) family.

The protein resides in the secreted. Probably binds lipids. The chain is Fatty-acid and retinol-binding protein 2 (far-2) from Caenorhabditis elegans.